Reading from the N-terminus, the 426-residue chain is 3-phosphoshikimate 1-carboxyvinyltransferase (426 aa).

3-phosphoshikimate-binding residues include Lys-22, Ser-23, and Arg-27. Lys-22 is a phosphoenolpyruvate binding site. Gly-96 and Arg-124 together coordinate phosphoenolpyruvate. Residues Ser-170, Ser-171, Gln-172, Ser-198, Asp-314, Asn-337, and Lys-341 each contribute to the 3-phosphoshikimate site. Gln-172 lines the phosphoenolpyruvate pocket. The Proton acceptor role is filled by Asp-314. The phosphoenolpyruvate site is built by Arg-345, Arg-387, and Lys-412.

It belongs to the EPSP synthase family. In terms of assembly, monomer.

The protein localises to the cytoplasm. The catalysed reaction is 3-phosphoshikimate + phosphoenolpyruvate = 5-O-(1-carboxyvinyl)-3-phosphoshikimate + phosphate. The protein operates within metabolic intermediate biosynthesis; chorismate biosynthesis; chorismate from D-erythrose 4-phosphate and phosphoenolpyruvate: step 6/7. Catalyzes the transfer of the enolpyruvyl moiety of phosphoenolpyruvate (PEP) to the 5-hydroxyl of shikimate-3-phosphate (S3P) to produce enolpyruvyl shikimate-3-phosphate and inorganic phosphate. The polypeptide is 3-phosphoshikimate 1-carboxyvinyltransferase (Shewanella piezotolerans (strain WP3 / JCM 13877)).